The chain runs to 131 residues: Holo-[acyl-carrier-protein] synthase (131 aa).

The Mg(2+) site is built by D8 and E59.

This sequence belongs to the P-Pant transferase superfamily. AcpS family. The cofactor is Mg(2+).

Its subcellular location is the cytoplasm. It catalyses the reaction apo-[ACP] + CoA = holo-[ACP] + adenosine 3',5'-bisphosphate + H(+). Transfers the 4'-phosphopantetheine moiety from coenzyme A to a Ser of acyl-carrier-protein. The protein is Holo-[acyl-carrier-protein] synthase of Orientia tsutsugamushi (strain Boryong) (Rickettsia tsutsugamushi).